The chain runs to 284 residues: Probable endonuclease 4 (284 aa).

The Zn(2+) site is built by H69, H113, E148, D182, H185, H217, D230, H232, and E262.

Belongs to the AP endonuclease 2 family. The cofactor is Zn(2+).

It catalyses the reaction Endonucleolytic cleavage to 5'-phosphooligonucleotide end-products.. Its function is as follows. Endonuclease IV plays a role in DNA repair. It cleaves phosphodiester bonds at apurinic or apyrimidinic (AP) sites, generating a 3'-hydroxyl group and a 5'-terminal sugar phosphate. This is Probable endonuclease 4 from Bifidobacterium longum subsp. infantis (strain ATCC 15697 / DSM 20088 / JCM 1222 / NCTC 11817 / S12).